Reading from the N-terminus, the 509-residue chain is Lysine--tRNA ligase (509 aa).

Mg(2+) is bound by residues Glu418 and Glu425.

This sequence belongs to the class-II aminoacyl-tRNA synthetase family. In terms of assembly, homodimer. The cofactor is Mg(2+).

It localises to the cytoplasm. It catalyses the reaction tRNA(Lys) + L-lysine + ATP = L-lysyl-tRNA(Lys) + AMP + diphosphate. The chain is Lysine--tRNA ligase from Acinetobacter baumannii (strain ATCC 17978 / DSM 105126 / CIP 53.77 / LMG 1025 / NCDC KC755 / 5377).